The following is a 523-amino-acid chain: Signal peptide peptidase-like 2A (523 aa).

The signal sequence occupies residues 1 to 25; the sequence is MGLLHSLHAPAAALLWSCLLGLAAA. The Lumenal portion of the chain corresponds to 26 to 175; that stretch reads QEAILHASTN…PSWPNFDYTL (150 aa). 6 N-linked (GlcNAc...) asparagine glycosylation sites follow: Asn-51, Asn-61, Asn-69, Asn-119, Asn-129, and Asn-135. The 86-residue stretch at 70 to 155 folds into the PA domain; sequence LTGTALCHLS…KDFKDMKETL (86 aa). The chain crosses the membrane as a helical span at residues 176–196; it reads VVIFVIAVFTVALGGYWSGLI. Residues 197-224 are Cytoplasmic-facing; sequence ELENMKSVEDAEDRETRKKKDDYLTFSP. The chain crosses the membrane as a helical span at residues 225–245; sequence LTVVVFVVICCIMIVLLYFFY. At 246 to 247 the chain is on the lumenal side; sequence RW. Residues 248–268 traverse the membrane as a helical segment; it reads LVYVMIAIFCIASSMSLYNCL. Residues 269–288 lie on the Cytoplasmic side of the membrane; it reads SALIHRMPCGQCTILCCGKN. The helical transmembrane segment at 289 to 309 threads the bilayer; sequence IKVSLIFLSGLCISVAVVWAV. Residues 310-315 lie on the Lumenal side of the membrane; it reads FRNEDR. A helical membrane pass occupies residues 316–336; it reads WAWILQDILGIAFCLNLIKTM. Residues 337–344 are Cytoplasmic-facing; that stretch reads KLPNFMSC. The chain crosses the membrane as a helical span at residues 345 to 365; that stretch reads VILLGLLLIYDVFFVFITPFI. The active site involves Asp-355. Residues 366-403 lie on the Lumenal side of the membrane; the sequence is TKNGESIMVELAAGPFENAEKLPVVIRVPKLMGYSVMS. The chain crosses the membrane as a helical span at residues 404–424; it reads VCSVPVSVLGFGDIIVPGLLI. The active site involves Asp-416. Topologically, residues 425-440 are cytoplasmic; the sequence is AYCRRFDVQTGSSIYY. Residues 441–461 traverse the membrane as a helical segment; the sequence is ISSTIAYAVGMIITFVVLMVM. Residues 462 to 463 are Lumenal-facing; the sequence is KT. Residues 464–484 traverse the membrane as a helical segment; that stretch reads GQPALLYLVPCTLITVSVVAW. The short motif at 466 to 468 is the PAL element; it reads PAL. The Cytoplasmic segment spans residues 485-523; that stretch reads SRKEMKKFWKGSSYQVMDHLDYSTNEENPVTTDEQIVQQ. The short motif at 498–501 is the YXXo lysosomal targeting motif element; sequence YQVM.

It belongs to the peptidase A22B family. Interacts with ITM2B. In terms of processing, glycosylated.

It localises to the late endosome membrane. Its subcellular location is the lysosome membrane. The protein localises to the membrane. Functionally, intramembrane-cleaving aspartic protease (I-CLiP) that cleaves type II membrane signal peptides in the hydrophobic plane of the membrane. Functions in FASLG, ITM2B and TNF processing. Catalyzes the intramembrane cleavage of the anchored fragment of shed TNF-alpha (TNF), which promotes the release of the intracellular domain (ICD) for signaling to the nucleus. Also responsible for the intramembrane cleavage of Fas antigen ligand FASLG, which promotes the release of the intracellular FasL domain (FasL ICD). Essential for degradation of the invariant chain CD74 that plays a central role in the function of antigen-presenting cells in the immune system. Plays a role in the regulation of innate and adaptive immunity. This Mus musculus (Mouse) protein is Signal peptide peptidase-like 2A.